We begin with the raw amino-acid sequence, 144 residues long: Neuritin-A (144 aa).

The signal sequence occupies residues 1 to 27 (MGLKLSGRYIFLVLAVHLAYLLQAVKA). Residue Ser-114 is the site of GPI-anchor amidated serine attachment. Positions 115–144 (AGAPGQRLLFPAFLPLLMVFLSTLFILVLQ) are cleaved as a propeptide — removed in mature form.

Belongs to the neuritin family. As to expression, expressed in sensory regions of the brain including the visual, auditory and olfactory systems. Within the retina, only expressed in the retinal ganglion cells. Concentrated in axon tracts including retinal axons.

The protein localises to the cell membrane. Its function is as follows. Modulates postsynaptic dendritic arbor elaboration and synaptic maturation. The protein is Neuritin-A (nrn1-a) of Xenopus laevis (African clawed frog).